Reading from the N-terminus, the 401-residue chain is Multidrug resistance protein MdtH (401 aa).

At 1-12 (MSRVSQARNLGK) the chain is on the cytoplasmic side. The chain crosses the membrane as a helical span at residues 13-33 (YFLLIDNMLVVLGFFVVFPLV). At 34–98 (SIRFVDQMGW…GFATMGIAHE (65 aa)) the chain is on the periplasmic side. A helical membrane pass occupies residues 99 to 116 (PWLLWFSCLLSGLGGTLF). The Cytoplasmic segment spans residues 117 to 137 (DPPRSALVVKLMPQQRGRFFS). Residues 138 to 158 (LLMMQDSAGAVIGALLGSWLL) form a helical membrane-spanning segment. At 159–163 (QYDFR) the chain is on the periplasmic side. The helical transmembrane segment at 164 to 184 (LVCATGAVLFVLCAAFNAWLL) threads the bilayer. Residues 185-212 (PAWKLSTIRTPVREGMTRVMRDKRFVTY) are Cytoplasmic-facing. A helical transmembrane segment spans residues 213-233 (VLTLAGYYMLAVQVMLMLPIM). Residues 234 to 242 (VNDVAGAPS) lie on the Periplasmic side of the membrane. Residues 243–263 (AVKWMYAIEACLSLTLLYPIA) form a helical membrane-spanning segment. Over 264–275 (RWSEKHFRLEHR) the chain is Cytoplasmic. The chain crosses the membrane as a helical span at residues 276 to 296 (LMAGLLIMSLSMMPVGMVSGL). Topologically, residues 297–298 (QQ) are periplasmic. The helical transmembrane segment at 299-319 (LFTLICLFYIGSIIAEPARET) threads the bilayer. Topologically, residues 320 to 338 (LSASLADARARGSYMGFSR) are cytoplasmic. Residues 339–359 (LGLAIGGTIGYIGGGWLFDLG) form a helical membrane-spanning segment. The Periplasmic portion of the chain corresponds to 360-366 (KSAHQPE). A helical membrane pass occupies residues 367–387 (LPWMMLGIIGIFTFLALGWQF). The Cytoplasmic portion of the chain corresponds to 388 to 401 (SQKRAARRLLERDA).

Belongs to the major facilitator superfamily. DHA1 family. MdtH (TC 2.A.1.2.21) subfamily.

It is found in the cell inner membrane. This chain is Multidrug resistance protein MdtH, found in Shigella dysenteriae serotype 1 (strain Sd197).